The following is a 260-amino-acid chain: Vesicle-associated membrane protein 7B (260 aa).

Residues 1 to 189 (MPIIYSLVAR…KCAMWWKNVK (189 aa)) lie on the Cytoplasmic side of the membrane. Residues 7–110 (LVARGSSVLA…GMNSDFSRTL (104 aa)) enclose the Longin domain. The v-SNARE coiled-coil homology domain occupies 125–186 (TMSRTMAEID…KQLKCAMWWK (62 aa)). The chain crosses the membrane as a helical; Anchor for type IV membrane protein span at residues 190–210 (LMLVLGAIVLIIIFIIVMSYC). Residues 211-260 (DGFRSGSKCRSSPSSNSTPTPTPTETPTPTPTPTSTPTPSQLLETLLNQF) lie on the Vesicular side of the membrane. The interval 215–250 (SGSKCRSSPSSNSTPTPTPTETPTPTPTPTSTPTPS) is disordered. Residues 230 to 246 (TPTPTETPTPTPTPTST) are compositionally biased toward pro residues.

It belongs to the synaptobrevin family.

The protein resides in the cytoplasmic vesicle. The protein localises to the secretory vesicle membrane. It localises to the golgi apparatus. It is found in the trans-Golgi network membrane. Its subcellular location is the late endosome membrane. The protein resides in the lysosome membrane. The protein localises to the endoplasmic reticulum membrane. It localises to the phagosome membrane. Functionally, involved in the targeting and/or fusion of transport vesicles to their target membrane during transport of proteins from the early endosome to the lysosome. Required for heterotypic fusion of late endosomes with lysosomes and homotypic lysosomal fusion. This is Vesicle-associated membrane protein 7B from Dictyostelium discoideum (Social amoeba).